The primary structure comprises 160 residues: Cytochrome b6-f complex subunit 4 (160 aa).

3 helical membrane passes run 36–56 (LLYTFPVCILGTIGCLVGLAV), 95–115 (LLGVVLMAGVPAGLLTVPFIE), and 131–151 (TVFLIGTVVAVWLGIGATLPI).

It belongs to the cytochrome b family. PetD subfamily. As to quaternary structure, the 4 large subunits of the cytochrome b6-f complex are cytochrome b6, subunit IV (17 kDa polypeptide, petD), cytochrome f and the Rieske protein, while the 4 small subunits are petG, petL, petM and petN. The complex functions as a dimer.

Its subcellular location is the plastid. It localises to the chloroplast thylakoid membrane. Its function is as follows. Component of the cytochrome b6-f complex, which mediates electron transfer between photosystem II (PSII) and photosystem I (PSI), cyclic electron flow around PSI, and state transitions. This Mesostigma viride (Green alga) protein is Cytochrome b6-f complex subunit 4.